Here is a 737-residue protein sequence, read N- to C-terminus: Phosphoribosylformylglycinamidine synthase subunit PurL (737 aa).

Residue His48 is part of the active site. Tyr51 and Lys90 together coordinate ATP. Glu92 contacts Mg(2+). Residues 93–96 and Arg115 contribute to the substrate site; that span reads SHNH. His94 functions as the Proton acceptor in the catalytic mechanism. Residue Asp116 coordinates Mg(2+). Gln244 contributes to the substrate binding site. Asp272 provides a ligand contact to Mg(2+). 316–318 contributes to the substrate binding site; the sequence is ESQ. ATP is bound by residues Asp500 and Gly537. Asn538 serves as a coordination point for Mg(2+). Ser540 is a binding site for substrate.

The protein belongs to the FGAMS family. In terms of assembly, monomer. Part of the FGAM synthase complex composed of 1 PurL, 1 PurQ and 2 PurS subunits.

The protein resides in the cytoplasm. The enzyme catalyses N(2)-formyl-N(1)-(5-phospho-beta-D-ribosyl)glycinamide + L-glutamine + ATP + H2O = 2-formamido-N(1)-(5-O-phospho-beta-D-ribosyl)acetamidine + L-glutamate + ADP + phosphate + H(+). Its pathway is purine metabolism; IMP biosynthesis via de novo pathway; 5-amino-1-(5-phospho-D-ribosyl)imidazole from N(2)-formyl-N(1)-(5-phospho-D-ribosyl)glycinamide: step 1/2. Functionally, part of the phosphoribosylformylglycinamidine synthase complex involved in the purines biosynthetic pathway. Catalyzes the ATP-dependent conversion of formylglycinamide ribonucleotide (FGAR) and glutamine to yield formylglycinamidine ribonucleotide (FGAM) and glutamate. The FGAM synthase complex is composed of three subunits. PurQ produces an ammonia molecule by converting glutamine to glutamate. PurL transfers the ammonia molecule to FGAR to form FGAM in an ATP-dependent manner. PurS interacts with PurQ and PurL and is thought to assist in the transfer of the ammonia molecule from PurQ to PurL. This Sulfurimonas denitrificans (strain ATCC 33889 / DSM 1251) (Thiomicrospira denitrificans (strain ATCC 33889 / DSM 1251)) protein is Phosphoribosylformylglycinamidine synthase subunit PurL.